The chain runs to 424 residues: 3-isopropylmalate dehydratase large subunit (424 aa).

[4Fe-4S] cluster-binding residues include Cys-299, Cys-359, and Cys-362.

This sequence belongs to the aconitase/IPM isomerase family. LeuC type 2 subfamily. Heterodimer of LeuC and LeuD. It depends on [4Fe-4S] cluster as a cofactor.

It carries out the reaction (2R,3S)-3-isopropylmalate = (2S)-2-isopropylmalate. Its pathway is amino-acid biosynthesis; L-leucine biosynthesis; L-leucine from 3-methyl-2-oxobutanoate: step 2/4. In terms of biological role, catalyzes the isomerization between 2-isopropylmalate and 3-isopropylmalate, via the formation of 2-isopropylmaleate. This is 3-isopropylmalate dehydratase large subunit from Hydrogenobaculum sp. (strain Y04AAS1).